Here is a 356-residue protein sequence, read N- to C-terminus: Glucose 1-dehydrogenase 2 (356 aa).

Position 38 (Asp-38) interacts with Zn(2+). Ser-40 provides a ligand contact to substrate. Zn(2+)-binding residues include His-64 and Glu-65. The substrate site is built by Glu-114 and Glu-150. Position 150 (Glu-150) interacts with Zn(2+). Residues Asn-181–Leu-184, Arg-206–Arg-207, and Val-301–Asn-303 each bind NADP(+). Asn-303 contributes to the substrate binding site.

Belongs to the zinc-containing alcohol dehydrogenase family. Glucose 1-dehydrogenase subfamily. Zn(2+) is required as a cofactor.

It catalyses the reaction D-glucose + NAD(+) = D-glucono-1,5-lactone + NADH + H(+). The catalysed reaction is D-glucose + NADP(+) = D-glucono-1,5-lactone + NADPH + H(+). In terms of biological role, catalyzes the NAD(P)(+)-dependent oxidation of D-glucose to D-gluconate via gluconolactone. Can utilize both NAD(+) and NADP(+) as electron acceptor. Is involved in the degradation of glucose through a modified Entner-Doudoroff pathway. In Haloterrigena turkmenica (strain ATCC 51198 / DSM 5511 / JCM 9101 / NCIMB 13204 / VKM B-1734 / 4k) (Halococcus turkmenicus), this protein is Glucose 1-dehydrogenase 2.